Here is a 165-residue protein sequence, read N- to C-terminus: Transcription antitermination protein NusB (165 aa).

A disordered region spans residues 139–165 (EAVRSHRRNKRPAADKPVATDKPAAAE).

This sequence belongs to the NusB family.

Functionally, involved in transcription antitermination. Required for transcription of ribosomal RNA (rRNA) genes. Binds specifically to the boxA antiterminator sequence of the ribosomal RNA (rrn) operons. This is Transcription antitermination protein NusB from Laribacter hongkongensis (strain HLHK9).